The chain runs to 477 residues: C4-dicarboxylate transport protein 1 (477 aa).

Helical transmembrane passes span 21 to 39 (PYVQ…GHFY), 59 to 76 (MIIA…IAGM), 89 to 111 (AMVY…GNVI), 162 to 179 (ILQV…LAMV), 200 to 221 (LVGI…FTIG), 231 to 253 (LAML…LGAV), 342 to 364 (VLLL…AGFV), and 368 to 387 (ATLS…ILGV). The interval 435–477 (SAGQPLITPAPSNSAASLPVESPGWSQTPDDRAAGSKQTLAGR) is disordered.

This sequence belongs to the dicarboxylate/amino acid:cation symporter (DAACS) (TC 2.A.23) family.

Its subcellular location is the cell inner membrane. In terms of biological role, responsible for the transport of dicarboxylates such as succinate, fumarate, and malate from the periplasm across the membrane. This transport system plays an important role in the energy supply of rhizobium-legume symbionts. In Mesorhizobium japonicum (strain LMG 29417 / CECT 9101 / MAFF 303099) (Mesorhizobium loti (strain MAFF 303099)), this protein is C4-dicarboxylate transport protein 1 (dctA1).